The chain runs to 297 residues: 4-diphosphocytidyl-2-C-methyl-D-erythritol kinase (297 aa).

Residue Lys6 is part of the active site. ATP is bound at residue 94 to 104 (PVAGGMAGGSA). Residue Asp136 is part of the active site.

This sequence belongs to the GHMP kinase family. IspE subfamily.

It carries out the reaction 4-CDP-2-C-methyl-D-erythritol + ATP = 4-CDP-2-C-methyl-D-erythritol 2-phosphate + ADP + H(+). Its pathway is isoprenoid biosynthesis; isopentenyl diphosphate biosynthesis via DXP pathway; isopentenyl diphosphate from 1-deoxy-D-xylulose 5-phosphate: step 3/6. In terms of biological role, catalyzes the phosphorylation of the position 2 hydroxy group of 4-diphosphocytidyl-2C-methyl-D-erythritol. This Nocardioides sp. (strain ATCC BAA-499 / JS614) protein is 4-diphosphocytidyl-2-C-methyl-D-erythritol kinase.